The sequence spans 281 residues: NAD kinase (281 aa).

Asp-66 functions as the Proton acceptor in the catalytic mechanism. Residues 66–67, 137–138, Arg-148, Arg-165, Asp-167, and 178–183 each bind NAD(+); these read DG, ND, and TAYSMS.

It belongs to the NAD kinase family. The cofactor is a divalent metal cation.

The protein localises to the cytoplasm. The enzyme catalyses NAD(+) + ATP = ADP + NADP(+) + H(+). Functionally, involved in the regulation of the intracellular balance of NAD and NADP, and is a key enzyme in the biosynthesis of NADP. Catalyzes specifically the phosphorylation on 2'-hydroxyl of the adenosine moiety of NAD to yield NADP. This Chlorobium phaeovibrioides (strain DSM 265 / 1930) (Prosthecochloris vibrioformis (strain DSM 265)) protein is NAD kinase.